Reading from the N-terminus, the 480-residue chain is Beta-amyrin 28-monooxygenase (480 aa).

Residues 3 to 23 (VFFLSLLLICVLSVSIRLYLL) form a helical membrane-spanning segment. Cysteine 427 lines the heme pocket.

The protein belongs to the cytochrome P450 family. It depends on heme as a cofactor. In terms of tissue distribution, expressed in leaves, stems and fruit skin.

Its subcellular location is the membrane. The enzyme catalyses beta-amyrin + 3 reduced [NADPH--hemoprotein reductase] + 3 O2 = oleanolate + 3 oxidized [NADPH--hemoprotein reductase] + 4 H2O + 4 H(+). Catalyzes the carboxylation of beta-amyrin at the C-28 position to form oleanolic acid. May be involved in saponin biosynthesis in fruit skin. This is Beta-amyrin 28-monooxygenase from Vitis vinifera (Grape).